A 265-amino-acid chain; its full sequence is Phosphate import ATP-binding protein PstB 1 (265 aa).

One can recognise an ABC transporter domain in the interval 20 to 260; it reads LSTNDLSVLY…PKGKITEDYI (241 aa). Position 53–60 (53–60) interacts with ATP; it reads GASGSGKS.

The protein belongs to the ABC transporter superfamily. Phosphate importer (TC 3.A.1.7) family. In terms of assembly, the complex is composed of two ATP-binding proteins (PstB), two transmembrane proteins (PstC and PstA) and a solute-binding protein (PstS).

It is found in the cell membrane. The catalysed reaction is phosphate(out) + ATP + H2O = ADP + 2 phosphate(in) + H(+). In terms of biological role, part of the ABC transporter complex PstSACB involved in phosphate import. Responsible for energy coupling to the transport system. This chain is Phosphate import ATP-binding protein PstB 1, found in Lactobacillus acidophilus (strain ATCC 700396 / NCK56 / N2 / NCFM).